Reading from the N-terminus, the 793-residue chain is DNA mismatch repair protein MutS (793 aa).

589-596 (GPNMSGKS) contacts ATP.

Belongs to the DNA mismatch repair MutS family.

Functionally, this protein is involved in the repair of mismatches in DNA. It is possible that it carries out the mismatch recognition step. This protein has a weak ATPase activity. The sequence is that of DNA mismatch repair protein MutS from Thermotoga sp. (strain RQ2).